Reading from the N-terminus, the 475-residue chain is Ribulose bisphosphate carboxylase large chain (475 aa).

The propeptide occupies 1-2; sequence MS. An N-acetylproline modification is found at P3. At K14 the chain carries N6,N6,N6-trimethyllysine. Substrate is bound by residues N123 and T173. The active-site Proton acceptor is K175. K177 contributes to the substrate binding site. K201, D203, and E204 together coordinate Mg(2+). The residue at position 201 (K201) is an N6-carboxylysine. Catalysis depends on H294, which acts as the Proton acceptor. Residues R295, H327, and S379 each contribute to the substrate site.

It belongs to the RuBisCO large chain family. Type I subfamily. In terms of assembly, heterohexadecamer of 8 large chains and 8 small chains; disulfide-linked. The disulfide link is formed within the large subunit homodimers. Requires Mg(2+) as cofactor. Post-translationally, the disulfide bond which can form in the large chain dimeric partners within the hexadecamer appears to be associated with oxidative stress and protein turnover.

It is found in the plastid. It localises to the chloroplast. The catalysed reaction is 2 (2R)-3-phosphoglycerate + 2 H(+) = D-ribulose 1,5-bisphosphate + CO2 + H2O. It carries out the reaction D-ribulose 1,5-bisphosphate + O2 = 2-phosphoglycolate + (2R)-3-phosphoglycerate + 2 H(+). RuBisCO catalyzes two reactions: the carboxylation of D-ribulose 1,5-bisphosphate, the primary event in carbon dioxide fixation, as well as the oxidative fragmentation of the pentose substrate in the photorespiration process. Both reactions occur simultaneously and in competition at the same active site. The sequence is that of Ribulose bisphosphate carboxylase large chain from Magnolia acuminata (Cucumber tree).